Consider the following 124-residue polypeptide: Putative melanoma-associated antigen 5P (124 aa).

The span at 1–14 (MSLEQKSQHCKPEE) shows a compositional bias: basic and acidic residues. 2 disordered regions span residues 1–69 (MSLE…QGAS) and 82–103 (QSIKGSSNQEEEGPSTSPDPES). The 122-residue stretch at 3-124 (LEQKSQHCKP…DLIHFLLLKY (122 aa)) folds into the MAGE domain. 2 stretches are compositionally biased toward polar residues: residues 30–44 (AATTEEQEAVSSSSP) and 82–100 (QSIKGSSNQEEEGPSTSPD).

As to expression, expressed in many tumors of several types, such as melanoma, head and neck squamous cell carcinoma, lung carcinoma and breast carcinoma, but not in normal tissues except for testes.

Its function is as follows. May negatively regulates apoptosis. This chain is Putative melanoma-associated antigen 5P, found in Homo sapiens (Human).